Reading from the N-terminus, the 251-residue chain is Methionine aminopeptidase (251 aa).

H76 serves as a coordination point for substrate. 3 residues coordinate a divalent metal cation: D93, D104, and H168. H175 contributes to the substrate binding site. Residues E202 and E233 each contribute to the a divalent metal cation site.

It belongs to the peptidase M24A family. Methionine aminopeptidase type 1 subfamily. As to quaternary structure, monomer. The cofactor is Co(2+). Requires Zn(2+) as cofactor. Mn(2+) is required as a cofactor. It depends on Fe(2+) as a cofactor.

It carries out the reaction Release of N-terminal amino acids, preferentially methionine, from peptides and arylamides.. Its function is as follows. Removes the N-terminal methionine from nascent proteins. The N-terminal methionine is often cleaved when the second residue in the primary sequence is small and uncharged (Met-Ala-, Cys, Gly, Pro, Ser, Thr, or Val). Requires deformylation of the N(alpha)-formylated initiator methionine before it can be hydrolyzed. The protein is Methionine aminopeptidase of Staphylococcus epidermidis (strain ATCC 35984 / DSM 28319 / BCRC 17069 / CCUG 31568 / BM 3577 / RP62A).